A 71-amino-acid chain; its full sequence is High-potential iron-sulfur protein isozyme 2 (71 aa).

Residues cysteine 34, cysteine 37, cysteine 51, and cysteine 65 each contribute to the [4Fe-4S] cluster site.

Belongs to the high-potential iron-sulfur protein (HiPIP) family. Homodimer.

Functionally, specific class of high-redox-potential 4Fe-4S ferredoxins. Functions in anaerobic electron transport in most purple and in some other photosynthetic bacteria and in at least one genus (Paracoccus) of halophilic, denitrifying bacteria. This is High-potential iron-sulfur protein isozyme 2 (hip2) from Ectothiorhodospira shaposhnikovii (Ectothiorhodospira vacuolata).